A 1155-amino-acid chain; its full sequence is ATP-dependent helicase/deoxyribonuclease subunit B (1155 aa).

The region spanning 1–300 is the UvrD-like helicase ATP-binding domain; sequence MSLRFIVGRA…AHLEKYYFRH (300 aa). 8–15 contacts ATP; the sequence is GRAGSGKS. Positions 280–590 constitute a UvrD-like helicase C-terminal domain; that stretch reads TPVRFQKDSA…VVGTLERSRN (311 aa). [4Fe-4S] cluster-binding residues include cysteine 792, cysteine 1111, cysteine 1114, and cysteine 1120.

Belongs to the helicase family. AddB/RexB type 1 subfamily. In terms of assembly, heterodimer of AddA and AddB. Mg(2+) serves as cofactor. Requires [4Fe-4S] cluster as cofactor.

Functionally, the heterodimer acts as both an ATP-dependent DNA helicase and an ATP-dependent, dual-direction single-stranded exonuclease. Recognizes the chi site generating a DNA molecule suitable for the initiation of homologous recombination. The AddB subunit has 5' -&gt; 3' nuclease activity but not helicase activity. The polypeptide is ATP-dependent helicase/deoxyribonuclease subunit B (Desulforamulus reducens (strain ATCC BAA-1160 / DSM 100696 / MI-1) (Desulfotomaculum reducens)).